Consider the following 387-residue polypeptide: Cystathionine gamma-lyase (387 aa).

Positions 53, 105, and 110 each coordinate substrate. Lys-202 is modified (N6-(pyridoxal phosphate)lysine). Glu-329 is a binding site for substrate.

The protein belongs to the trans-sulfuration enzymes family. As to quaternary structure, homotetramer. Interacts with CALM in a calcium-dependent manner. Requires pyridoxal 5'-phosphate as cofactor.

The protein localises to the cytoplasm. The catalysed reaction is L,L-cystathionine + H2O = 2-oxobutanoate + L-cysteine + NH4(+). It catalyses the reaction L-cysteine + H2O = hydrogen sulfide + pyruvate + NH4(+) + H(+). It carries out the reaction L-homocysteine + H2O = 2-oxobutanoate + hydrogen sulfide + NH4(+) + H(+). The enzyme catalyses L-homoserine = 2-oxobutanoate + NH4(+). Its pathway is amino-acid biosynthesis; L-cysteine biosynthesis; L-cysteine from L-homocysteine and L-serine: step 2/2. In terms of biological role, catalyzes the last step in the trans-sulfuration pathway from L-methionine to L-cysteine in a pyridoxal-5'-phosphate (PLP)-dependent manner, which consists on cleaving the L,L-cystathionine molecule into L-cysteine, ammonia and 2-oxobutanoate. Part of the L-cysteine derived from the trans-sulfuration pathway is utilized for biosynthesis of the ubiquitous antioxidant glutathione. Besides its role in the conversion of L-cystathionine into L-cysteine, it utilizes L-cysteine and L-homocysteine as substrates (at much lower rates than L,L-cystathionine) to produce the endogenous gaseous signaling molecule hydrogen sulfide (H2S). In Dictyostelium discoideum (Social amoeba), this protein is Cystathionine gamma-lyase (cysA).